The chain runs to 133 residues: Small ribosomal subunit protein uS8 (133 aa).

The protein belongs to the universal ribosomal protein uS8 family. In terms of assembly, part of the 30S ribosomal subunit. Contacts proteins S5 and S12.

Functionally, one of the primary rRNA binding proteins, it binds directly to 16S rRNA central domain where it helps coordinate assembly of the platform of the 30S subunit. The protein is Small ribosomal subunit protein uS8 of Trichormus variabilis (strain ATCC 29413 / PCC 7937) (Anabaena variabilis).